The following is a 133-amino-acid chain: Small ribosomal subunit protein uS8 (133 aa).

It belongs to the universal ribosomal protein uS8 family. As to quaternary structure, part of the 30S ribosomal subunit. Contacts proteins S5 and S12.

In terms of biological role, one of the primary rRNA binding proteins, it binds directly to 16S rRNA central domain where it helps coordinate assembly of the platform of the 30S subunit. The sequence is that of Small ribosomal subunit protein uS8 from Prochlorococcus marinus subsp. pastoris (strain CCMP1986 / NIES-2087 / MED4).